We begin with the raw amino-acid sequence, 126 residues long: Small ribosomal subunit protein uS13 (126 aa).

A disordered region spans residues 92 to 126 (HRRGLPANGQRTHTNARTRKGPRKGMLQRRPAATK). The segment covering 105 to 118 (TNARTRKGPRKGML) has biased composition (basic residues).

The protein belongs to the universal ribosomal protein uS13 family. Part of the 30S ribosomal subunit. Forms a loose heterodimer with protein S19. Forms two bridges to the 50S subunit in the 70S ribosome.

Located at the top of the head of the 30S subunit, it contacts several helices of the 16S rRNA. In the 70S ribosome it contacts the 23S rRNA (bridge B1a) and protein L5 of the 50S subunit (bridge B1b), connecting the 2 subunits; these bridges are implicated in subunit movement. Contacts the tRNAs in the A and P-sites. The polypeptide is Small ribosomal subunit protein uS13 (Sorangium cellulosum (strain So ce56) (Polyangium cellulosum (strain So ce56))).